Here is a 190-residue protein sequence, read N- to C-terminus: Ubiquinol-cytochrome c reductase iron-sulfur subunit (190 aa).

A helical transmembrane segment spans residues 18-39 (FLYYATAGAGTVAAGAAAWTLV). Residues 95-188 (GQLIDRSAQN…AEFLDDTTIK (94 aa)) enclose the Rieske domain. Residues cysteine 132, histidine 134, cysteine 152, and histidine 155 each coordinate [2Fe-2S] cluster. A disulfide bridge connects residues cysteine 137 and cysteine 154.

It belongs to the Rieske iron-sulfur protein family. As to quaternary structure, the main subunits of complex b-c1 are: cytochrome b, cytochrome c1 and the Rieske protein. The cofactor is [2Fe-2S] cluster.

The protein localises to the cell membrane. The catalysed reaction is a quinol + 2 Fe(III)-[cytochrome c](out) = a quinone + 2 Fe(II)-[cytochrome c](out) + 2 H(+)(out). Component of the ubiquinol-cytochrome c reductase complex (complex III or cytochrome b-c1 complex), which is a respiratory chain that generates an electrochemical potential coupled to ATP synthesis. The polypeptide is Ubiquinol-cytochrome c reductase iron-sulfur subunit (petA) (Paracoccus denitrificans).